The chain runs to 91 residues: Small ribosomal subunit protein uS19 (91 aa).

This sequence belongs to the universal ribosomal protein uS19 family.

Protein S19 forms a complex with S13 that binds strongly to the 16S ribosomal RNA. In Pseudomonas syringae pv. syringae (strain B728a), this protein is Small ribosomal subunit protein uS19.